Consider the following 237-residue polypeptide: Ribonuclease PH (237 aa).

Residues Arg-86 and Gly-124–Arg-126 contribute to the phosphate site.

This sequence belongs to the RNase PH family. Homohexameric ring arranged as a trimer of dimers.

It carries out the reaction tRNA(n+1) + phosphate = tRNA(n) + a ribonucleoside 5'-diphosphate. In terms of biological role, phosphorolytic 3'-5' exoribonuclease that plays an important role in tRNA 3'-end maturation. Removes nucleotide residues following the 3'-CCA terminus of tRNAs; can also add nucleotides to the ends of RNA molecules by using nucleoside diphosphates as substrates, but this may not be physiologically important. Probably plays a role in initiation of 16S rRNA degradation (leading to ribosome degradation) during starvation. The sequence is that of Ribonuclease PH from Shewanella sp. (strain ANA-3).